Consider the following 75-residue polypeptide: Small ribosomal subunit protein eS17 (75 aa).

It belongs to the eukaryotic ribosomal protein eS17 family.

In Thermoplasma acidophilum (strain ATCC 25905 / DSM 1728 / JCM 9062 / NBRC 15155 / AMRC-C165), this protein is Small ribosomal subunit protein eS17.